A 296-amino-acid chain; its full sequence is Zinc finger CCCH-type antiviral protein 1-like (296 aa).

Position 2 is an N-acetylalanine (Ala2). 2 C3H1-type zinc fingers span residues 111-136 (LCRRHMLGKCPHRDCWSTCSLSHDIH) and 198-219 (VCKSFVRGECPFQPCKRSHQLI).

This is Zinc finger CCCH-type antiviral protein 1-like (Zc3hav1l) from Mus musculus (Mouse).